A 2119-amino-acid chain; its full sequence is Outer kinetochore KNL1 complex subunit KNL1 (2119 aa).

Residues 1–59 (MDGVYSEANEENDNTQRPVRRQHSSILKPPRSPLQDLKCGNQTNQEPNPPRKRKSSRRV) form a disordered region. The tract at residues 1 to 202 (MDGVYSEANE…SDNFIKRLKT (202 aa)) is may mediate oligomerization. Interaction with microtubules regions lie at residues 17–34 (RPVR…RSPL) and 53–80 (RKSS…ERNS). The tract at residues 23–80 (HSSILKPPRSPLQDLKCGNQTNQEPNPPRKRKSSRRVSFADTIKVFQTESHMKTERNS) is interaction with PP1CA; contains the protein phosphatase 1 (PP1) interaction motifs SILK, RVXF and phi-phi. Residues serine 24, serine 32, and serine 60 each carry the phosphoserine modification. The segment at 124-140 (ENQMDLTASHTVMITKG) is interaction with BUB1. The interval 160-179 (ENLKHHAANSRIKKDLACST) is interaction with BUB1B. A Phosphoserine modification is found at serine 538. Phosphothreonine is present on residues threonine 540 and threonine 739. Residues 723-827 (DKTILFSEGN…MTKSHTVFID (105 aa)) form repeat 1. Residues 723-1027 (DKTILFSEGN…VTRSHTVFID (305 aa)) form a 2 X 104 AA approximate repeats region. Residues serine 794 and serine 878 each carry the phosphoserine modification. The stretch at 923–1027 (KSITFPENDK…VTRSHTVFID (105 aa)) is repeat 2. Serine 1243 and serine 1464 each carry phosphoserine. The tract at residues 1557-1583 (SQRESLPSENKTENCRAQKRTRVEEND) is disordered. The segment covering 1566 to 1583 (NKTENCRAQKRTRVEEND) has biased composition (basic and acidic residues). Residues 1577–1590 (TRVEENDVTNEKKI) carry the Nuclear localization signal motif. Phosphoserine occurs at positions 1616, 1627, and 1642. The segment at 1763–1890 (KVKDYSDEEL…FLEVETQKTQ (128 aa)) is required for interaction with ZWINT. A coiled-coil region spans residues 1799-1890 (VALYNKLVHS…FLEVETQKTQ (92 aa)). Residues 1873–2093 (EEEELQRKFL…GKTGHDEIAA (221 aa)) form an interaction with NSL1, DSN1 and required for assembly into the outer kinetochore region.

Component of the KNL1 complex composed of KNL1 and ZWINT. Part of the ten-subunit outer kinetochore KMN network that includes the KNL1, MIS12 and NDC80 complexes; a bioriented kinetochore contains approximately 150 copies of the network. Interacts (via C-terminus) with the MIS12 complex subunits NSL1 (via C-terminus), PMF1 and DSN1; the interaction is direct. Interacts (via N-terminal region) with BUB1B (via BUB1 N-terminal domain); the interaction is direct and is required for cell cycle arrest upon activation of the mitotic spindle assembly checkpoint. Interacts (via N-terminal region) with BUB1 (via BUB1 N-terminal domain); the interaction is direct. Interacts with the protein phosphatase PP1 subunit PPP1CA; the interaction is direct and mutually exclusive with binding to microtubules. Interacts with the protein phosphatase PP1 subunit PPP1CC; the interaction is direct and mutually exclusive with binding to microtubules. In terms of processing, phosphorylation by AURKB negatively regulates its interaction with protein phosphatase 1 (PP1) subunit PPP1CA and with microtubules. As to expression, expressed in oocytes during meiotic progression (at protein level). Expressed during spermatogenesis.

It localises to the nucleus. It is found in the chromosome. The protein resides in the centromere. The protein localises to the kinetochore. Its subcellular location is the cytoplasm. Functionally, acts as a component of the outer kinetochore KNL1 complex that serves as a docking point for spindle assembly checkpoint components and mediates microtubule-kinetochore interactions. Kinetochores, consisting of a centromere-associated inner segment and a microtubule-contacting outer segment, play a crucial role in chromosome segregation by mediating the physical connection between centromeric DNA and spindle microtubules. The outer kinetochore is made up of the ten-subunit KMN network, comprising the MIS12, NDC80 and KNL1 complexes, and auxiliary microtubule-associated components; together they connect the outer kinetochore with the inner kinetochore, bind microtubules, and mediate interactions with mitotic checkpoint proteins that delay anaphase until chromosomes are bioriented on the spindle. Required for kinetochore binding by a distinct subset of kMAPs (kinetochore-bound microtubule-associated proteins) and motors. Acts in coordination with CENPK to recruit the NDC80 complex to the outer kinetochore. Can bind either to microtubules or to the protein phosphatase 1 (PP1) catalytic subunits PPP1CA and PPP1CC (via overlapping binding sites), it has higher affinity for PP1. Recruits MAD2L1 to the kinetochore and also directly links BUB1 and BUB1B to the kinetochore. In addition to orienting mitotic chromosomes, it is also essential for alignment of homologous chromosomes during meiotic metaphase I. In meiosis I, required to activate the spindle assembly checkpoint at unattached kinetochores to correct erroneous kinetochore-microtubule attachments. This chain is Outer kinetochore KNL1 complex subunit KNL1, found in Mus musculus (Mouse).